Consider the following 484-residue polypeptide: Monocarboxylate transporter 2 (484 aa).

Over Met-1–Asp-16 the chain is Cytoplasmic. A helical transmembrane segment spans residues Gly-17–Phe-37. The Extracellular segment spans residues Pro-38 to Ala-60. A helical membrane pass occupies residues Trp-61–Val-81. Residues Asn-82–Arg-87 lie on the Cytoplasmic side of the membrane. A helical transmembrane segment spans residues Pro-88–Asn-108. The Extracellular segment spans residues Ser-109–Thr-116. Residues Ile-117–Gly-137 form a helical membrane-spanning segment. Residues Lys-138 to Arg-144 lie on the Cytoplasmic side of the membrane. Residues Pro-145–Phe-165 traverse the membrane as a helical segment. Topologically, residues Asn-166–Gly-174 are extracellular. The helical transmembrane segment at Trp-175–Leu-195 threads the bilayer. The Cytoplasmic segment spans residues Met-196 to Gly-245. The tract at residues Thr-201–Ser-224 is disordered. The chain crosses the membrane as a helical span at residues Phe-246–Phe-266. Residues Leu-267 to Ala-282 lie on the Extracellular side of the membrane. Residues Leu-283–Ala-303 form a helical membrane-spanning segment. Over Asn-304–Arg-311 the chain is Cytoplasmic. A helical membrane pass occupies residues Ile-312–Leu-332. The Extracellular segment spans residues Ala-333–Pro-337. The helical transmembrane segment at Ala-338 to Phe-358 threads the bilayer. Residues Glu-359 to Ser-372 are Cytoplasmic-facing. A helical transmembrane segment spans residues Ala-373–Gly-393. At Lys-394 to Met-405 the chain is on the extracellular side. A helical transmembrane segment spans residues Tyr-406–Ile-426. Residues Asn-427–Ile-484 are Cytoplasmic-facing. The interval Arg-437–Ile-484 is disordered. Basic and acidic residues-rich tracts occupy residues Pro-449–Ser-465 and Pro-475–Ile-484.

It belongs to the major facilitator superfamily. Monocarboxylate porter (TC 2.A.1.13) family. In terms of assembly, homodimer. Interacts with GRID2IP. Interacts with EMB; interaction mediates SLC16A7 targeting to the plasma membrane. Interacts with isoform 2 of BSG. In terms of tissue distribution, abundant on the surface of hepatocytes. Present on parietal cells of the oxyntic gland of the stomach, on the basolateral surface of epithelial cells in the collecting ducts of the kidney, on sperm tails throughout the epididymis. Expressed in mitochondria-rich skeletal muscle fibers and cardiac myocytes (at protein level).

It is found in the cell membrane. The protein resides in the basolateral cell membrane. Its subcellular location is the cytoplasm. It catalyses the reaction pyruvate(out) + H(+)(out) = pyruvate(in) + H(+)(in). The enzyme catalyses 3-methyl-2-oxobutanoate(out) + H(+)(out) = 3-methyl-2-oxobutanoate(in) + H(+)(in). The catalysed reaction is (S)-lactate(in) + H(+)(in) = (S)-lactate(out) + H(+)(out). It carries out the reaction acetoacetate(out) + H(+)(out) = acetoacetate(in) + H(+)(in). It catalyses the reaction (R)-3-hydroxybutanoate(out) + H(+)(out) = (R)-3-hydroxybutanoate(in) + H(+)(in). The enzyme catalyses 4-methyl-2-oxopentanoate(out) + H(+)(out) = 4-methyl-2-oxopentanoate(in) + H(+)(in). The catalysed reaction is (S)-3-hydroxybutanoate(out) + H(+)(out) = (S)-3-hydroxybutanoate(in) + H(+)(in). Transport activity exhibits steep dependence on substrate concentration. Substrate concentration sensitivity of SLC16A7 arises from the strong inter-subunit cooperativity of the SLC16A7 dimer during transport. Inhibited by AR-C155858. Its function is as follows. Proton-coupled monocarboxylate symporter. Catalyzes the rapid transport across the plasma membrane of monocarboxylates such as L-lactate, pyruvate and ketone bodies, acetoacetate, beta-hydroxybutyrate and acetate. Dimerization is functionally required and both subunits work cooperatively in transporting substrate. This is Monocarboxylate transporter 2 (SLC16A7) from Mesocricetus auratus (Golden hamster).